A 517-amino-acid polypeptide reads, in one-letter code: 2-isopropylmalate synthase (517 aa).

A Pyruvate carboxyltransferase domain is found at 4-266 (INFFDTTLRD…ESTIQLNEIK (263 aa)). D13, H201, H203, and N237 together coordinate Mn(2+). The segment at 391–517 (EFESLQVHYG…IEIEKHHAIS (127 aa)) is regulatory domain.

Belongs to the alpha-IPM synthase/homocitrate synthase family. LeuA type 1 subfamily. In terms of assembly, homodimer. Requires Mn(2+) as cofactor.

The protein resides in the cytoplasm. It carries out the reaction 3-methyl-2-oxobutanoate + acetyl-CoA + H2O = (2S)-2-isopropylmalate + CoA + H(+). The protein operates within amino-acid biosynthesis; L-leucine biosynthesis; L-leucine from 3-methyl-2-oxobutanoate: step 1/4. Catalyzes the condensation of the acetyl group of acetyl-CoA with 3-methyl-2-oxobutanoate (2-ketoisovalerate) to form 3-carboxy-3-hydroxy-4-methylpentanoate (2-isopropylmalate). In Bacillus pumilus (strain SAFR-032), this protein is 2-isopropylmalate synthase.